The primary structure comprises 224 residues: tRNA (guanine-N(7)-)-methyltransferase (224 aa).

S-adenosyl-L-methionine contacts are provided by Glu45, Glu70, Asp97, and Asp119. Asp119 is an active-site residue. Substrate-binding positions include Lys123, Asp155, and 199-202 (TEYE).

The protein belongs to the class I-like SAM-binding methyltransferase superfamily. TrmB family.

The enzyme catalyses guanosine(46) in tRNA + S-adenosyl-L-methionine = N(7)-methylguanosine(46) in tRNA + S-adenosyl-L-homocysteine. It participates in tRNA modification; N(7)-methylguanine-tRNA biosynthesis. Functionally, catalyzes the formation of N(7)-methylguanine at position 46 (m7G46) in tRNA. The protein is tRNA (guanine-N(7)-)-methyltransferase of Ureaplasma urealyticum serovar 10 (strain ATCC 33699 / Western).